The chain runs to 485 residues: Probable aspartic-type endopeptidase opsB (485 aa).

The N-terminal stretch at 1–20 (MRHIFSLLSIVCLMVKHGAC) is a signal peptide. The Peptidase A1 domain occupies 69-397 (YFCNVTLGTP…DIANNEISIA (329 aa)). N-linked (GlcNAc...) asparagine glycosylation occurs at N72. D87 is an active-site residue. 4 N-linked (GlcNAc...) asparagine glycosylation sites follow: N99, N107, N111, and N132. The active site involves D285. N328, N337, and N402 each carry an N-linked (GlcNAc...) asparagine glycan. S461 is lipidated: GPI-anchor amidated serine. The propeptide at 462-485 (AGVARADKQYLAIALIAVWFVLGL) is removed in mature form.

This sequence belongs to the peptidase A1 family.

Its subcellular location is the cell membrane. Probable GPI-anchored aspartic-type endopeptidase which contributes to virulence. This is Probable aspartic-type endopeptidase opsB (opsB) from Aspergillus fumigatus (strain ATCC MYA-4609 / CBS 101355 / FGSC A1100 / Af293) (Neosartorya fumigata).